A 286-amino-acid chain; its full sequence is ATP synthase gamma chain (286 aa).

Belongs to the ATPase gamma chain family. As to quaternary structure, F-type ATPases have 2 components, CF(1) - the catalytic core - and CF(0) - the membrane proton channel. CF(1) has five subunits: alpha(3), beta(3), gamma(1), delta(1), epsilon(1). CF(0) has three main subunits: a, b and c.

The protein localises to the cell inner membrane. Functionally, produces ATP from ADP in the presence of a proton gradient across the membrane. The gamma chain is believed to be important in regulating ATPase activity and the flow of protons through the CF(0) complex. This chain is ATP synthase gamma chain, found in Pseudoalteromonas translucida (strain TAC 125).